The primary structure comprises 473 residues: H(+)/Cl(-) exchange transporter ClcA (473 aa).

Residues 1-32 lie on the Cytoplasmic side of the membrane; it reads MKTDTSTFLAQQIVRLRRRDQIRRLMQRDKTP. Residues 33-69 form a helical membrane-spanning segment; sequence LAILFMAAVVGTLTGLVGVAFEKAVSWVQNMRIGALV. Residues 70-76 are Periplasmic-facing; sequence QVADHAF. Residues 77–100 form a helical membrane-spanning segment; it reads LLWPLAFILSALLAMVGYFLVRKF. Residues 106-110 carry the Selectivity filter part_1 motif; sequence GSGIP. Serine 107 lines the chloride pocket. Residues 109–116 constitute an intramembrane region (helical); the sequence is IPEIEGAL. The Cytoplasmic portion of the chain corresponds to 117–123; sequence EELRPVR. 2 consecutive transmembrane segments (helical) span residues 124 to 141 and 148 to 166; these read WWRV…TLGA and EGPT…LDVF. The short motif at 146–150 is the Selectivity filter part_2 element; that stretch reads GREGP. The Cytoplasmic portion of the chain corresponds to 167-176; that stretch reads RMRSAEARHT. 2 consecutive intramembrane regions (helical) follow at residues 177 to 189 and 193 to 201; these read LLAT…LSAA and PLAGILFII. The Cytoplasmic segment spans residues 202-214; that stretch reads EEMRPQFRYNLIS. A helical membrane pass occupies residues 215–232; that stretch reads IKAVFTGVIMSSIVFRIF. The Periplasmic segment spans residues 233 to 252; sequence NGEAPIIEVGKLSDAPVNTL. Residues 253-281 form a helical membrane-spanning segment; the sequence is WLYLILGIIFGCVGPVFNSLVLRTQDMFQ. At 282-287 the chain is on the cytoplasmic side; sequence RFHGGE. The chain crosses the membrane as a helical span at residues 288–309; that stretch reads IKKWVLMGGAIGGLCGILGLIE. Residues 310–329 lie on the Periplasmic side of the membrane; it reads PEAAGGGFNLIPIAAAGNFS. Transmembrane regions (helical) follow at residues 330–349 and 355–376; these read VGLL…LCFS and GIFA…MAAA. The Selectivity filter part_3 motif lies at 355–359; the sequence is GIFAP. Chloride contacts are provided by isoleucine 356 and phenylalanine 357. Residues 377 to 386 lie on the Periplasmic side of the membrane; that stretch reads VLFPQYHLEA. The helical intramembrane region spans 387 to 401; sequence GTFAIAGMGALMAAS. The segment at residues 402 to 404 is an intramembrane region (note=Loop between two helices); it reads VRA. Positions 405 to 416 form an intramembrane region, helical; it reads PLTGIVLVLEMT. An intramembrane region (note=Loop between two helices) is located at residues 417 to 421; that stretch reads DNYQL. The helical transmembrane segment at 422–438 threads the bilayer; that stretch reads ILPMIITCLGATLLAQF. At 439-473 the chain is on the cytoplasmic side; that stretch reads LGGKPLYSTILARTLAKQDAEQAAKSQNAPAGENT. Chloride is bound at residue tyrosine 445.

This sequence belongs to the chloride channel (TC 2.A.49) family. ClcA subfamily. In terms of assembly, homodimer.

It localises to the cell inner membrane. The enzyme catalyses 2 chloride(in) + H(+)(out) = 2 chloride(out) + H(+)(in). In terms of biological role, proton-coupled chloride transporter. Functions as antiport system and exchanges two chloride ions for 1 proton. Probably acts as an electrical shunt for an outwardly-directed proton pump that is linked to amino acid decarboxylation, as part of the extreme acid resistance (XAR) response. The chain is H(+)/Cl(-) exchange transporter ClcA from Salmonella gallinarum (strain 287/91 / NCTC 13346).